The primary structure comprises 293 residues: N(1)-aminopropylagmatine ureohydrolase (293 aa).

Mn(2+)-binding residues include histidine 105, aspartate 128, histidine 130, aspartate 132, aspartate 210, and aspartate 212.

Belongs to the arginase family. The cofactor is Mn(2+).

The protein resides in the cytoplasm. The catalysed reaction is N(1)-(3-aminopropyl)agmatine + H2O = urea + spermidine. Its pathway is amine and polyamine biosynthesis; spermidine biosynthesis. Involved in the biosynthesis of polyamines which are thought to support the growth of thermophilic microorganisms under high-temperature conditions. It seems that long-chain and branched-chain of polyamines effectively stabilize DNA and RNA, respectively. Catalyzes the decarboxylation of N1-(3-aminopropyl)agmatine to yield spermidine and urea. It cannot use agmatine as substrate. The protein is N(1)-aminopropylagmatine ureohydrolase of Thermus thermophilus (strain ATCC 27634 / DSM 579 / HB8).